A 242-amino-acid polypeptide reads, in one-letter code: Probable transcriptional regulatory protein Bphyt_1301 (242 aa).

The protein belongs to the TACO1 family.

It localises to the cytoplasm. This is Probable transcriptional regulatory protein Bphyt_1301 from Paraburkholderia phytofirmans (strain DSM 17436 / LMG 22146 / PsJN) (Burkholderia phytofirmans).